Reading from the N-terminus, the 152-residue chain is Snaclec coagulation factor IX/factor X-binding protein subunit A (152 aa).

An N-terminal signal peptide occupies residues 1–23; sequence MGRFIFVSFGLLVVAASLSGTGA. 3 disulfides stabilise this stretch: Cys-25-Cys-36, Cys-53-Cys-150, and Cys-125-Cys-142. The 120-residue stretch at 32-151 folds into the C-type lectin domain; the sequence is YEGHCYKAFE…CGQRIPFVCE (120 aa). Residues Ser-64, Glu-66, and Glu-70 each contribute to the Ca(2+) site. Ca(2+) is bound at residue Glu-151.

This sequence belongs to the snaclec family. Heterodimer of subunits A and B; disulfide-linked. Expressed by the venom gland.

It is found in the secreted. Anticoagulant protein which binds to the gamma-carboxyglutamic acid-domain regions of factors IX (F9) and factor X (F10) in the presence of calcium with a 1 to 1 stoichiometry. The sequence is that of Snaclec coagulation factor IX/factor X-binding protein subunit A from Trimeresurus stejnegeri (Chinese green tree viper).